A 436-amino-acid polypeptide reads, in one-letter code: Tubulin epsilon and delta complex protein 2 (436 aa).

Disordered stretches follow at residues 53-76 and 94-191; these read ARTPSPVPETKEEDPSPACAPSSQ and VRKG…PSSA. Low complexity predominate over residues 111–131; that stretch reads TSKAATSGAAAASHPRAPSRG. Residues 153-170 show a composition bias toward basic and acidic residues; the sequence is DYPEHRLRSKGDKTHVRT. Serine 161 carries the phosphoserine modification.

As to quaternary structure, interacts with TEDC1. Found in a complex with TEDC1, TEDC2, TUBE1 and TUBD1.

Its subcellular location is the cell projection. It is found in the cilium. It localises to the cytoplasm. The protein localises to the cytoskeleton. The protein resides in the microtubule organizing center. Its subcellular location is the centrosome. It is found in the centriole. Functionally, acts as a positive regulator of ciliary hedgehog signaling. Required for centriole stability. This Mus musculus (Mouse) protein is Tubulin epsilon and delta complex protein 2.